We begin with the raw amino-acid sequence, 459 residues long: Vasoactive intestinal polypeptide receptor 1 (459 aa).

The N-terminal stretch at 1 to 30 (MRPPSLPPARWLCVLAGALACALGPAGSRA) is a signal peptide. The Extracellular portion of the chain corresponds to 31-142 (ASPHQECEYL…EQQQTEFYDA (112 aa)). Disulfide bonds link Cys37–Cys209, Cys50–Cys72, Cys63–Cys105, Cys86–Cys122, and Cys216–Cys286. 4 N-linked (GlcNAc...) asparagine glycosylation sites follow: Asn58, Asn69, Asn100, and Asn104. The helical transmembrane segment at 143-167 (VKTGYTIGYSLSLASLLVAMAILSL) threads the bilayer. At 168 to 175 (FRKLHCTR) the chain is on the cytoplasmic side. The helical transmembrane segment at 176–197 (NYIHMHLFMSFILRATAVFIKD) threads the bilayer. Over 198 to 217 (MALFNNGETDHCSEASVSCK) the chain is Extracellular. Residues 218–242 (AAVVFFQYCVMANFFWLLVEGLYLH) form a helical membrane-spanning segment. Topologically, residues 243–255 (TLLAVSFFSERKY) are cytoplasmic. Residues 256 to 277 (FWGYILIGWGVPSVFIMIWTIV) traverse the membrane as a helical segment. Residues 278–293 (RIHFEDFGCWDTIINS) are Extracellular-facing. A glycan (N-linked (GlcNAc...) asparagine) is linked at Asn292. The chain crosses the membrane as a helical span at residues 294–318 (SLWWIIKGPILISILVNFILFICII). At 319–340 (RILVQKLRPPDIGKNDSSPYSR) the chain is on the cytoplasmic side. A helical membrane pass occupies residues 341-361 (LAKSTLLLIPLFGVHYVMFAF). Topologically, residues 362-369 (FPDNFKAQ) are extracellular. A helical transmembrane segment spans residues 370-393 (VKMVFELVVGSFQGFVVAILYCFL). At 394–459 (NGEVQAELRR…SSFQAEVSLV (66 aa)) the chain is on the cytoplasmic side.

The protein belongs to the G-protein coupled receptor 2 family. In terms of assembly, interacts with ADCYAP1/PACAP; activated by both PACAP27 and PACAP38 neuropeptides. Interacts with VIP; the interaction results in VIPR1 activation.

The protein localises to the cell membrane. In terms of biological role, g protein-coupled receptor activated by the neuropeptides vasoactive intestinal peptide (VIP) and pituitary adenylate cyclase-activating polypeptide (ADCYAP1/PACAP). Binds VIP and both PACAP27 and PACAP38 bioactive peptides with the following order of ligand affinity VIP = PACAP27 &gt; PACAP38. Ligand binding causes a conformation change that triggers signaling via guanine nucleotide-binding proteins (G proteins) and modulates the activity of downstream effectors. Activates cAMP-dependent pathway. This is Vasoactive intestinal polypeptide receptor 1 from Mus musculus (Mouse).